The sequence spans 931 residues: Protocadherin gamma-A5 (931 aa).

The N-terminal stretch at M1–G29 is a signal peptide. 6 Cadherin domains span residues Q30–F133, R134–F242, T243–V347, I348–F452, P453–I562, and D570–D683. Topologically, residues Q30–Y692 are extracellular. N-linked (GlcNAc...) asparagine glycans are attached at residues N419 and N545. Residues L693–V713 traverse the membrane as a helical segment. The Cytoplasmic segment spans residues L714–K931. Disordered regions lie at residues N800 to N840 and A901 to K931. Positions A809–N840 are enriched in polar residues. A compositionally biased stretch (basic residues) spans N921–K931.

The protein resides in the cell membrane. In terms of biological role, potential calcium-dependent cell-adhesion protein. May be involved in the establishment and maintenance of specific neuronal connections in the brain. The chain is Protocadherin gamma-A5 (PCDHGA5) from Homo sapiens (Human).